The sequence spans 678 residues: Depolymerase 2, capsule K56-specific (678 aa).

It in the N-terminal section; belongs to the Przondovirus depolymerase 2 family. As to quaternary structure, homotrimer. Interacts (via N-terminus) with depolymerase 1 (via N-terminus); this interaction probably gives rise to a branched tailspike.

Its subcellular location is the virion. Functions as a receptor binding protein (RBP) and probably mediates the attachment to the host capsular exopolysaccharides. Displays a depolymerase activity that specifically degrades the K56-type polysaccharides of Klebsiella pneumoniae capsule, which allows the phage to reach the host cell membrane and bind the entry receptor. This chain is Depolymerase 2, capsule K56-specific, found in Klebsiella pneumoniae (Bacteriophage KN3-1).